We begin with the raw amino-acid sequence, 224 residues long: A-type ATP synthase subunit D (224 aa).

The span at 200–209 (KKVKDKKEAQ) shows a compositional bias: basic and acidic residues. The segment at 200-224 (KKVKDKKEAQEEAADEAAAAESTGA) is disordered. Low complexity predominate over residues 215–224 (EAAAAESTGA).

Belongs to the V-ATPase D subunit family. In terms of assembly, has multiple subunits with at least A(3), B(3), C, D, E, F, H, I and proteolipid K(x).

It is found in the cell membrane. Component of the A-type ATP synthase that produces ATP from ADP in the presence of a proton gradient across the membrane. This is A-type ATP synthase subunit D from Halobacterium salinarum (strain ATCC 29341 / DSM 671 / R1).